The primary structure comprises 656 residues: Chaperone protein DnaK (656 aa).

Threonine 204 is subject to Phosphothreonine; by autocatalysis. A disordered region spans residues valine 607–lysine 656. Positions glycine 620–glycine 632 are enriched in low complexity. Residues lysine 647–lysine 656 are compositionally biased toward basic and acidic residues.

The protein belongs to the heat shock protein 70 family.

In terms of biological role, acts as a chaperone. This is Chaperone protein DnaK from Coxiella burnetii (strain CbuK_Q154) (Coxiella burnetii (strain Q154)).